The sequence spans 1771 residues: Fatty acid synthase alpha subunit pkiB (1771 aa).

Positions 108-130 (SQPTQPQFEPTSPSHLTKRSPSP) are enriched in polar residues. The interval 108–133 (SQPTQPQFEPTSPSHLTKRSPSPSKA) is disordered. A Carrier domain is found at 143–221 (ELTLQAGHVI…ESFQPEFSGI (79 aa)). Residue Ser181 is modified to O-(pantetheine 4'-phosphoryl)serine. Positions 575-771 (HKAVLVTGAG…CGAVIGWTRG (197 aa)) are beta-ketoacyl reductase. Residues 1011 to 1531 (KELLHEVAVE…QKGAINIMVS (521 aa)) form the Ketosynthase family 3 (KS3) domain. Residues Cys1197, His1416, and His1457 each act as for beta-ketoacyl synthase activity in the active site. Mg(2+)-binding residues include Asp1650, Val1651, and Glu1652. Acetyl-CoA contacts are provided by residues 1650–1652 (DVE), Tyr1676, Ser1686, 1695–1705 (EAAFKSLQTTS), 1719–1722 (EVGG), and 1753–1755 (ISH). Positions 1754 and 1755 each coordinate Mg(2+).

It belongs to the thiolase-like superfamily. Fungal fatty acid synthetase subunit alpha family. As to quaternary structure, [Alpha(6)beta(6)] hexamers of two multifunctional subunits (alpha and beta).

The enzyme catalyses acetyl-CoA + n malonyl-CoA + 2n NADPH + 4n H(+) = a long-chain-acyl-CoA + n CoA + n CO2 + 2n NADP(+).. It carries out the reaction a fatty acyl-[ACP] + malonyl-[ACP] + H(+) = a 3-oxoacyl-[ACP] + holo-[ACP] + CO2. It catalyses the reaction a (3R)-hydroxyacyl-[ACP] + NADP(+) = a 3-oxoacyl-[ACP] + NADPH + H(+). Its pathway is secondary metabolite biosynthesis. Fatty acid synthase alpha subunit; part of the pki gene cluster that mediates the biosynthesis of 2,4-dihydroxy-3-methyl-6-(2-oxoundecyl)benzaldehyde. The first step in the pathway is the generation of the decanoyl starter unit by the FAS composed of subunits pkiB and pkiC, which is then transferred directly from the FAS to the SAT domain of the non-reducing polyketide synthase pkiA. PkiA condenses the decanoyyl starter unit with 4 malonyl-CoA units and performs one methylation step to yield 2,4-dihydroxy-3-methyl-6-(2-oxoundecyl)benzaldehyde. The chain is Fatty acid synthase alpha subunit pkiB from Emericella nidulans (strain FGSC A4 / ATCC 38163 / CBS 112.46 / NRRL 194 / M139) (Aspergillus nidulans).